A 934-amino-acid polypeptide reads, in one-letter code: Palmitoyltransferase ZDHHC8 (934 aa).

The Cytoplasmic portion of the chain corresponds to methionine 1–arginine 9. The helical transmembrane segment at tyrosine 10–tyrosine 30 threads the bilayer. At proline 31–glycine 47 the chain is on the extracellular side. A helical transmembrane segment spans residues valine 48–isoleucine 68. At proline 69–arginine 142 the chain is on the cytoplasmic side. Residues lysine 99–valine 149 form the DHHC domain. The active-site S-palmitoyl cysteine intermediate is cysteine 129. The chain crosses the membrane as a helical span at residues phenylalanine 143 to leucine 163. The Extracellular portion of the chain corresponds to valine 164–alanine 177. The helical transmembrane segment at proline 178–leucine 198 threads the bilayer. Topologically, residues threonine 199 to valine 934 are cytoplasmic. Disordered stretches follow at residues asparagine 336–serine 440, methionine 506–aspartate 525, glutamine 669–glycine 705, glutamine 751–glutamine 780, proline 835–arginine 862, and leucine 881–valine 934. Composition is skewed to polar residues over residues glycine 337–serine 349 and arginine 381–aspartate 394. Over residues glycine 397–aspartate 411 the composition is skewed to gly residues. Residues histidine 415–proline 429 are compositionally biased toward basic residues. Composition is skewed to low complexity over residues glutamine 688–glycine 705 and glutamine 751–alanine 765. Over residues histidine 768–glutamine 780 the composition is skewed to polar residues. The span at methionine 910–threonine 919 shows a compositional bias: polar residues.

Belongs to the DHHC palmitoyltransferase family. ERF2/ZDHHC9 subfamily.

The protein resides in the golgi apparatus membrane. The protein localises to the cell membrane. The enzyme catalyses L-cysteinyl-[protein] + hexadecanoyl-CoA = S-hexadecanoyl-L-cysteinyl-[protein] + CoA. Palmitoyltransferase that catalyzes the addition of palmitate onto various protein substrates and therefore functions in several unrelated biological processes. Regulates tissue growth possibly by regulating Ras64B protein stability. May regulate CG34450 mRNA levels. In Drosophila melanogaster (Fruit fly), this protein is Palmitoyltransferase ZDHHC8.